We begin with the raw amino-acid sequence, 148 residues long: Large ribosomal subunit protein bL9 (148 aa).

The protein belongs to the bacterial ribosomal protein bL9 family.

Binds to the 23S rRNA. The polypeptide is Large ribosomal subunit protein bL9 (Lachnoclostridium phytofermentans (strain ATCC 700394 / DSM 18823 / ISDg) (Clostridium phytofermentans)).